The primary structure comprises 239 residues: Ribonuclease PH (239 aa).

Phosphate-binding positions include arginine 86 and 124–126; that span reads GTR.

Belongs to the RNase PH family. Homohexameric ring arranged as a trimer of dimers.

The enzyme catalyses tRNA(n+1) + phosphate = tRNA(n) + a ribonucleoside 5'-diphosphate. In terms of biological role, phosphorolytic 3'-5' exoribonuclease that plays an important role in tRNA 3'-end maturation. Removes nucleotide residues following the 3'-CCA terminus of tRNAs; can also add nucleotides to the ends of RNA molecules by using nucleoside diphosphates as substrates, but this may not be physiologically important. Probably plays a role in initiation of 16S rRNA degradation (leading to ribosome degradation) during starvation. The polypeptide is Ribonuclease PH (Rhizobium etli (strain ATCC 51251 / DSM 11541 / JCM 21823 / NBRC 15573 / CFN 42)).